Reading from the N-terminus, the 61-residue chain is Adipokinetic prohormone type 2 (61 aa).

A signal peptide spans 1–22 (MTQSCTLTLVLVVAVLAALATA). The residue at position 23 (Gln-23) is a Pyrrolidone carboxylic acid. Position 30 is a tryptophan amide (Trp-30).

The protein belongs to the AKH/HRTH/RPCH family. In terms of assembly, adipokinetic hormone precursor-related peptide (APRP) can form three type of disulfide-bond dimers: p1 (alpha-alpha), p2 (alpha-beta), and p3 (beta-beta).

The protein resides in the secreted. Functionally, this hormone, released from cells in the corpora cardiaca, causes release of diglycerides from the fat body and stimulation of muscles to use these diglycerides as an energy source during energy-demanding processes. This Locusta migratoria (Migratory locust) protein is Adipokinetic prohormone type 2.